A 128-amino-acid chain; its full sequence is Glycine cleavage system H protein (128 aa).

A Lipoyl-binding domain is found at 25-107; that stretch reads TITVGITHHA…YGAGWFFKLK (83 aa). Lys66 is modified (N6-lipoyllysine).

This sequence belongs to the GcvH family. In terms of assembly, the glycine cleavage system is composed of four proteins: P, T, L and H. (R)-lipoate is required as a cofactor.

The glycine cleavage system catalyzes the degradation of glycine. The H protein shuttles the methylamine group of glycine from the P protein to the T protein. The sequence is that of Glycine cleavage system H protein from Neisseria meningitidis serogroup B (strain ATCC BAA-335 / MC58).